A 143-amino-acid polypeptide reads, in one-letter code: Protein Wnt-1 (143 aa).

S1 carries O-palmitoleoyl serine; by PORCN lipidation. A disordered region spans residues 38–81; it reads EGVRGNSNRGDRGDRRDRGDRSDNGGTEANFQPYNSNHKPPGPR. Basic and acidic residues predominate over residues 46–60; sequence RGDRGDRRDRGDRSD. A compositionally biased stretch (polar residues) spans 64–75; sequence TEANFQPYNSNH. A disulfide bridge links C109 with C124. N110 and N111 each carry an N-linked (GlcNAc...) asparagine glycan.

The protein belongs to the Wnt family. Palmitoleoylation is required for efficient binding to frizzled receptors. Palmitoleoylation is necessary for proper trafficking to cell surface. Depalmitoleoylated by NOTUM, leading to inhibit Wnt signaling pathway.

The protein localises to the secreted. It is found in the extracellular space. The protein resides in the extracellular matrix. In terms of biological role, ligand for members of the frizzled family of seven transmembrane receptors. Probable developmental protein. This Evasterias troschelii (Mottled sea star) protein is Protein Wnt-1 (WNT-1).